Reading from the N-terminus, the 376-residue chain is Alpha-2,8-sialyltransferase 8E (376 aa).

A helical membrane pass occupies residues 17-37 (TLLFIFICAFALVTLLQQILY). Residue asparagine 56 is glycosylated (N-linked (GlcNAc...) asparagine). 2 cysteine pairs are disulfide-bonded: cysteine 164–cysteine 313 and cysteine 178–cysteine 373. Substrate contacts are provided by residues asparagine 192 and 214 to 216 (NPS). A glycan (N-linked (GlcNAc...) asparagine) is linked at asparagine 241. 300 to 302 (STG) is a binding site for substrate. Residue histidine 348 is the Proton donor/acceptor of the active site.

Belongs to the glycosyltransferase 29 family. In terms of tissue distribution, expressed in liver.

It is found in the golgi apparatus membrane. It carries out the reaction a ganglioside GT1b (d18:1(4E)) + CMP-N-acetyl-beta-neuraminate = a ganglioside GQ1b (d18:1(4E)) + CMP + H(+). The catalysed reaction is a ganglioside GQ1c (d18:1(4E)) + CMP-N-acetyl-beta-neuraminate = a ganglioside GP1c (d18:1(4E)) + CMP + H(+). The enzyme catalyses a ganglioside GD3 (d18:1(4E)) + CMP-N-acetyl-beta-neuraminate = a ganglioside GT3 (d18:1(4E)) + CMP + H(+). It catalyses the reaction a ganglioside GD1a (d18:1(4E)) + CMP-N-acetyl-beta-neuraminate = a ganglioside GT1a (d18:1(4E)) + CMP + H(+). It carries out the reaction a ganglioside GM1b (d18:1(4E)) + CMP-N-acetyl-beta-neuraminate = a ganglioside GD1c (d18:1(4E)) + CMP + H(+). It functions in the pathway protein modification; protein glycosylation. Involved in the synthesis of gangliosides GD1c, GT1a, GQ1b, GP1c and GT3 from GD1a, GT1b, GM1b and GD3 respectively. The polypeptide is Alpha-2,8-sialyltransferase 8E (Rattus norvegicus (Rat)).